Reading from the N-terminus, the 115-residue chain is Putative ethidium bromide resistance protein (115 aa).

4 helical membrane-spanning segments follow: residues 4-21 (WLFLVIAIVGEVIATSAL), 30-47 (LAPSAVVIIGYGIAFYFL), 58-79 (VAYAVWSGLGVVIITAIAWLLH), and 85-104 (AWGFVGMGLIIAAFLLARSP).

It belongs to the drug/metabolite transporter (DMT) superfamily. Small multidrug resistance (SMR) (TC 2.A.7.1) family.

It localises to the cell membrane. Its function is as follows. One of the determinants for resistance to ethidium bromide and quaternary ammonium compounds. This chain is Putative ethidium bromide resistance protein (ebr), found in Escherichia coli.